The chain runs to 187 residues: Threonylcarbamoyl-AMP synthase (187 aa).

The YrdC-like domain maps to 4 to 187 (TLTLSEAVTA…DARSGHILRL (184 aa)).

It belongs to the SUA5 family. TsaC subfamily.

The protein localises to the cytoplasm. It catalyses the reaction L-threonine + hydrogencarbonate + ATP = L-threonylcarbamoyladenylate + diphosphate + H2O. In terms of biological role, required for the formation of a threonylcarbamoyl group on adenosine at position 37 (t(6)A37) in tRNAs that read codons beginning with adenine. Catalyzes the conversion of L-threonine, HCO(3)(-)/CO(2) and ATP to give threonylcarbamoyl-AMP (TC-AMP) as the acyladenylate intermediate, with the release of diphosphate. The polypeptide is Threonylcarbamoyl-AMP synthase (Xylella fastidiosa (strain M23)).